Reading from the N-terminus, the 150-residue chain is UPF0735 ACT domain-containing protein DSY2247 (150 aa).

Residues 74–149 (TFSLTLENTA…GVRKIEVIGQ (76 aa)) enclose the ACT domain.

The protein belongs to the UPF0735 family.

The chain is UPF0735 ACT domain-containing protein DSY2247 from Desulfitobacterium hafniense (strain Y51).